The primary structure comprises 179 residues: Ribosome maturation factor RimM (179 aa).

A PRC barrel domain is found at 100–176 (KEEFHLLELI…FVIINPPNGL (77 aa)).

The protein belongs to the RimM family. As to quaternary structure, binds ribosomal protein uS19.

Its subcellular location is the cytoplasm. In terms of biological role, an accessory protein needed during the final step in the assembly of 30S ribosomal subunit, possibly for assembly of the head region. Essential for efficient processing of 16S rRNA. May be needed both before and after RbfA during the maturation of 16S rRNA. It has affinity for free ribosomal 30S subunits but not for 70S ribosomes. The chain is Ribosome maturation factor RimM from Prochlorococcus marinus (strain MIT 9301).